The following is an 81-amino-acid chain: Elongation factor 1-beta (81 aa).

The protein belongs to the EF-1-beta/EF-1-delta family.

Its function is as follows. Promotes the exchange of GDP for GTP in EF-1-alpha/GDP, thus allowing the regeneration of EF-1-alpha/GTP that could then be used to form the ternary complex EF-1-alpha/GTP/AAtRNA. The protein is Elongation factor 1-beta of Nanoarchaeum equitans (strain Kin4-M).